The primary structure comprises 554 residues: Dihydroxy-acid dehydratase (554 aa).

Aspartate 78 serves as a coordination point for Mg(2+). Residue cysteine 119 coordinates [2Fe-2S] cluster. 2 residues coordinate Mg(2+): aspartate 120 and lysine 121. The residue at position 121 (lysine 121) is an N6-carboxylysine. Cysteine 191 serves as a coordination point for [2Fe-2S] cluster. Glutamate 444 is a binding site for Mg(2+). Residue serine 470 is the Proton acceptor of the active site.

This sequence belongs to the IlvD/Edd family. As to quaternary structure, homodimer. It depends on [2Fe-2S] cluster as a cofactor. Requires Mg(2+) as cofactor.

The catalysed reaction is (2R)-2,3-dihydroxy-3-methylbutanoate = 3-methyl-2-oxobutanoate + H2O. The enzyme catalyses (2R,3R)-2,3-dihydroxy-3-methylpentanoate = (S)-3-methyl-2-oxopentanoate + H2O. It participates in amino-acid biosynthesis; L-isoleucine biosynthesis; L-isoleucine from 2-oxobutanoate: step 3/4. The protein operates within amino-acid biosynthesis; L-valine biosynthesis; L-valine from pyruvate: step 3/4. Functionally, functions in the biosynthesis of branched-chain amino acids. Catalyzes the dehydration of (2R,3R)-2,3-dihydroxy-3-methylpentanoate (2,3-dihydroxy-3-methylvalerate) into 2-oxo-3-methylpentanoate (2-oxo-3-methylvalerate) and of (2R)-2,3-dihydroxy-3-methylbutanoate (2,3-dihydroxyisovalerate) into 2-oxo-3-methylbutanoate (2-oxoisovalerate), the penultimate precursor to L-isoleucine and L-valine, respectively. This Nitratidesulfovibrio vulgaris (strain DP4) (Desulfovibrio vulgaris) protein is Dihydroxy-acid dehydratase.